We begin with the raw amino-acid sequence, 185 residues long: Peptidyl-tRNA hydrolase (185 aa).

Y14 lines the tRNA pocket. H19 functions as the Proton acceptor in the catalytic mechanism. TRNA is bound by residues F64, N66, and N112.

Belongs to the PTH family. In terms of assembly, monomer.

The protein localises to the cytoplasm. The catalysed reaction is an N-acyl-L-alpha-aminoacyl-tRNA + H2O = an N-acyl-L-amino acid + a tRNA + H(+). Hydrolyzes ribosome-free peptidyl-tRNAs (with 1 or more amino acids incorporated), which drop off the ribosome during protein synthesis, or as a result of ribosome stalling. Functionally, catalyzes the release of premature peptidyl moieties from peptidyl-tRNA molecules trapped in stalled 50S ribosomal subunits, and thus maintains levels of free tRNAs and 50S ribosomes. This chain is Peptidyl-tRNA hydrolase, found in Lactobacillus johnsonii (strain CNCM I-12250 / La1 / NCC 533).